The following is a 181-amino-acid chain: MTASTKDILATAIRSIPDYPKPGIIFRDITTLLGDAAAFRLAVDELVKPYEGLGVDKIAGMEARGFILGGAMAHQLSAGFVPIRKKGKLPYRTVSMAYALEYGTDEMEIHVDAVKPGEKVILCDDLIATGGTAVGAVKLLRQIGAEVVSACFVIDLPDLGGRKALEALGVEVRTLAEFSGH.

This sequence belongs to the purine/pyrimidine phosphoribosyltransferase family. As to quaternary structure, homodimer.

The protein resides in the cytoplasm. It carries out the reaction AMP + diphosphate = 5-phospho-alpha-D-ribose 1-diphosphate + adenine. Its pathway is purine metabolism; AMP biosynthesis via salvage pathway; AMP from adenine: step 1/1. Functionally, catalyzes a salvage reaction resulting in the formation of AMP, that is energically less costly than de novo synthesis. In Neorhizobium galegae (Rhizobium galegae), this protein is Adenine phosphoribosyltransferase.